The sequence spans 173 residues: Ribosome maturation factor RimM (173 aa).

The PRC barrel domain occupies 98 to 170; it reads EDEYYWCDLI…RMLITPLEGL (73 aa).

This sequence belongs to the RimM family. As to quaternary structure, binds ribosomal protein uS19.

It is found in the cytoplasm. Its function is as follows. An accessory protein needed during the final step in the assembly of 30S ribosomal subunit, possibly for assembly of the head region. Essential for efficient processing of 16S rRNA. May be needed both before and after RbfA during the maturation of 16S rRNA. It has affinity for free ribosomal 30S subunits but not for 70S ribosomes. The chain is Ribosome maturation factor RimM from Pelobacter propionicus (strain DSM 2379 / NBRC 103807 / OttBd1).